A 139-amino-acid chain; its full sequence is MAIERTLSIIKPDAVAKNVIGQIYSRFEKAGLKIISAKMCHLSKPQAEKFYAVHKDRPFYPDLVKFMTQGPVMIQVLEGENAIVKNREIMGATNPKEALPGTIRADFADSIDANAVHGSDGPETAKEEIAFFFKPDEIF.

ATP-binding residues include K11, F59, R87, T93, R104, and N114. H117 acts as the Pros-phosphohistidine intermediate in catalysis.

The protein belongs to the NDK family. Homotetramer. Mg(2+) serves as cofactor.

The protein resides in the cytoplasm. The catalysed reaction is a 2'-deoxyribonucleoside 5'-diphosphate + ATP = a 2'-deoxyribonucleoside 5'-triphosphate + ADP. It catalyses the reaction a ribonucleoside 5'-diphosphate + ATP = a ribonucleoside 5'-triphosphate + ADP. Functionally, major role in the synthesis of nucleoside triphosphates other than ATP. The ATP gamma phosphate is transferred to the NDP beta phosphate via a ping-pong mechanism, using a phosphorylated active-site intermediate. This is Nucleoside diphosphate kinase from Coxiella burnetii (strain CbuK_Q154) (Coxiella burnetii (strain Q154)).